The following is a 187-amino-acid chain: Large ribosomal subunit protein uL22B (187 aa).

The protein belongs to the universal ribosomal protein uL22 family. Component of the large ribosomal subunit (LSU). Mature yeast ribosomes consist of a small (40S) and a large (60S) subunit. The 40S small subunit contains 1 molecule of ribosomal RNA (18S rRNA) and at least 33 different proteins. The large 60S subunit contains 3 rRNA molecules (25S, 5.8S and 5S rRNA) and at least 46 different proteins. uL22 is associated with the polypeptide exit tunnel.

Its subcellular location is the cytoplasm. Component of the ribosome, a large ribonucleoprotein complex responsible for the synthesis of proteins in the cell. The small ribosomal subunit (SSU) binds messenger RNAs (mRNAs) and translates the encoded message by selecting cognate aminoacyl-transfer RNA (tRNA) molecules. The large subunit (LSU) contains the ribosomal catalytic site termed the peptidyl transferase center (PTC), which catalyzes the formation of peptide bonds, thereby polymerizing the amino acids delivered by tRNAs into a polypeptide chain. The nascent polypeptides leave the ribosome through a tunnel in the LSU and interact with protein factors that function in enzymatic processing, targeting, and the membrane insertion of nascent chains at the exit of the ribosomal tunnel. This chain is Large ribosomal subunit protein uL22B (rpl1702), found in Schizosaccharomyces pombe (strain 972 / ATCC 24843) (Fission yeast).